A 324-amino-acid chain; its full sequence is Uroporphyrinogen decarboxylase (324 aa).

Residues Arg14–Arg18, Phe32, Asp63, Tyr136, Ser191, and His302 each bind substrate.

It belongs to the uroporphyrinogen decarboxylase family. As to quaternary structure, homodimer.

The protein resides in the cytoplasm. The enzyme catalyses uroporphyrinogen III + 4 H(+) = coproporphyrinogen III + 4 CO2. The protein operates within porphyrin-containing compound metabolism; protoporphyrin-IX biosynthesis; coproporphyrinogen-III from 5-aminolevulinate: step 4/4. Functionally, catalyzes the decarboxylation of four acetate groups of uroporphyrinogen-III to yield coproporphyrinogen-III. This chain is Uroporphyrinogen decarboxylase, found in Neorickettsia sennetsu (strain ATCC VR-367 / Miyayama) (Ehrlichia sennetsu).